Here is a 329-residue protein sequence, read N- to C-terminus: Bifunctional muramidase/DL-endopeptidase CwlT (329 aa).

The signal sequence occupies residues 1-29 (MISKKVVLPLVFSAPFIFFFVLCIVVVMT). The segment at 59–192 (RFRAVFEKYA…SYVDHVMRYV (134 aa)) is muramidase. A NlpC/P60 domain is found at 206–329 (MDFYETVMKE…DHLVSFGRIK (124 aa)). The active-site Nucleophile is the Cys-237. Residue His-290 is the Proton acceptor of the active site. Residue Asn-302 is part of the active site.

The protein belongs to the peptidase C40 family.

Its subcellular location is the secreted. The enzyme catalyses Hydrolysis of (1-&gt;4)-beta-linkages between N-acetylmuramic acid and N-acetyl-D-glucosamine residues in a peptidoglycan and between N-acetyl-D-glucosamine residues in chitodextrins.. Its function is as follows. Exhibits both muramidase and DL-endopeptidase activities. The N-terminal region acts as a N-acetylmuramidase, which cleaves the bond between N-acetylmuramic acid and N-acetyl-D-glucosamine (MurNAc-GlcNAc) in peptidoglycan. The C-terminal region acts as a DL-endopeptidase that cleaves the bond between D-gamma-glutamate and meso-diaminopimelic acid. Cannot degrade purified B.anthracis peptidoglycan, which differ from those of B.subtilis. CwlT is required for ICEBs1 conjugation: the muramidase activity is essential, whereas the peptidase activity is partially dispensable for transfer of ICEBs1. The chain is Bifunctional muramidase/DL-endopeptidase CwlT from Bacillus subtilis (strain 168).